Here is a 462-residue protein sequence, read N- to C-terminus: MTNPLWGGRFTTSSNDIMKKINESISFDQALYEEDILTSIAHCKMLVNQKIISKYEGQLIIHGLEVIQKQIESGNFEFSTDLEDIHMNIEYSLKKMIGNIAGKLHTARSRNDQIATDLKLWIRKSIKKLEQQLHKLQSTLLNIAENHYDTIMPGFTHLQIAQPVTLGHHLMAYFEMLKRDRSRWQDLYKRMNQCPAGSAALAGTSFPIDRHFIAQELGFDSPTENSIDAVSDRDYIIEFLSNASICIMHLSRLAEEIILWCSYNFKFITLSDNITTGSSIMPQKKNPDAAELIRGKTGRIFSSLNHILIVMKGLPLAYSKDMQEDKEPLFDAERNLILCIEAMNSMLNNITINSENMLKAAEHDYSTATDLADWLVKHINLSFRESHEITGQIVKLAEHNKCKIHELTLTQLQKIIPSITEDVFSVLSAKNSVTSRTSYGGTAPINVLQAIKNGRIYLENTD.

This sequence belongs to the lyase 1 family. Argininosuccinate lyase subfamily.

It is found in the cytoplasm. It carries out the reaction 2-(N(omega)-L-arginino)succinate = fumarate + L-arginine. It functions in the pathway amino-acid biosynthesis; L-arginine biosynthesis; L-arginine from L-ornithine and carbamoyl phosphate: step 3/3. The protein is Argininosuccinate lyase of Ehrlichia ruminantium (strain Welgevonden).